The following is a 463-amino-acid chain: ATP-dependent protease ATPase subunit HslU (463 aa).

ATP-binding positions include valine 21, 63-68, aspartate 276, glutamate 341, and arginine 413; that span reads GVGKTE.

The protein belongs to the ClpX chaperone family. HslU subfamily. A double ring-shaped homohexamer of HslV is capped on each side by a ring-shaped HslU homohexamer. The assembly of the HslU/HslV complex is dependent on binding of ATP.

It is found in the cytoplasm. ATPase subunit of a proteasome-like degradation complex; this subunit has chaperone activity. The binding of ATP and its subsequent hydrolysis by HslU are essential for unfolding of protein substrates subsequently hydrolyzed by HslV. HslU recognizes the N-terminal part of its protein substrates and unfolds these before they are guided to HslV for hydrolysis. This is ATP-dependent protease ATPase subunit HslU from Thermotoga neapolitana (strain ATCC 49049 / DSM 4359 / NBRC 107923 / NS-E).